Here is a 605-residue protein sequence, read N- to C-terminus: MAVMTDVSTTGTALRTPAAGAVKEGDVEKLRFIDEMTTNVDAVQERVLGEILGRNAGTEYLTKCGLDGATDRAAFRAKVPVVSYDDLQPYIQRIANGDRSPILSTHPVSEFLTSSGTSAGERKLMPTIMDELDRRQLLYSLLMPVMNLYVPGLDKGKGLYFLFVKSETKTPGGLTARPVLTSYYKSDHFKNRPYDPYHNYTSPTAAILCADAFQSMYAQMVCGLCQRNDVLRLGAVFASGLLRAIRFLQLNWEQLADDIESGELTPRVTDPSVREAVAAILLPDPELAKLIRAECSKGDWAGIITRVWPNTKYLDVIVTGAMAQYIPTLEFYSGGLPMACTMYASSECYFGLNLRPMCDPSEVSYTIMPNMGYFEFLPVDETGAASGDATQLVDLARVEVGREYELVITTYAGLNRYRVGDVLRVTGFHNAAPQFRFVRRKNVLLSIESDKTDEAELQRAVERASALLRPHGASVVEYTSQACTKRIPGHYVIYWELLTKGAGATVVDADTLGRCCLEMEEALNTVYRQSRVADGSIGPLEIRVVRPGTFEELMDYAISRGASINQYKVPRCVTFPPIVELLDSRVVSSHFSPALPHWTPARRSE.

AMP-binding positions include serine 115, 342–346 (MYASS), tyrosine 365, aspartate 421, and arginine 440.

Belongs to the IAA-amido conjugating enzyme family. As to expression, expressed in the inner floral organs (lodicules, stamens and carpels) and at lower levels in lemmas and paleas.

Its function is as follows. Catalyzes the synthesis of indole-3-acetic acid (IAA)-amino acid conjugates, providing a mechanism for the plant to cope with the presence of excessive free auxin. Produces more IAA-Asp levels than IAA-Ala levels in vitro. May participate in the activation of disease resistance by preventing the accumulation of free IAA, which reduces the expression of a group of auxin-responsive genes encoding expansins that control cell wall loosening and expansion. Contributes to late events in stamen and carpel differentiation, and influences floret fertility. This chain is Indole-3-acetic acid-amido synthetase GH3.8 (GH3.8), found in Oryza sativa subsp. indica (Rice).